The following is a 518-amino-acid chain: Glutamate--cysteine ligase (518 aa).

It belongs to the glutamate--cysteine ligase type 1 family. Type 1 subfamily.

The catalysed reaction is L-cysteine + L-glutamate + ATP = gamma-L-glutamyl-L-cysteine + ADP + phosphate + H(+). The protein operates within sulfur metabolism; glutathione biosynthesis; glutathione from L-cysteine and L-glutamate: step 1/2. This Shigella flexneri serotype 5b (strain 8401) protein is Glutamate--cysteine ligase.